Here is a 281-residue protein sequence, read N- to C-terminus: 2,3,4,5-tetrahydropyridine-2,6-dicarboxylate N-succinyltransferase (281 aa).

The substrate site is built by Arg108 and Asp145.

It belongs to the transferase hexapeptide repeat family. Homotrimer.

The protein localises to the cytoplasm. It catalyses the reaction (S)-2,3,4,5-tetrahydrodipicolinate + succinyl-CoA + H2O = (S)-2-succinylamino-6-oxoheptanedioate + CoA. Its pathway is amino-acid biosynthesis; L-lysine biosynthesis via DAP pathway; LL-2,6-diaminopimelate from (S)-tetrahydrodipicolinate (succinylase route): step 1/3. The polypeptide is 2,3,4,5-tetrahydropyridine-2,6-dicarboxylate N-succinyltransferase (Rhodopseudomonas palustris (strain BisA53)).